Here is a 158-residue protein sequence, read N- to C-terminus: Cyclic pyranopterin monophosphate synthase (158 aa).

Substrate is bound by residues 75–77 (LCH) and 113–114 (ME). The active site involves D128.

Belongs to the MoaC family. In terms of assembly, homohexamer; trimer of dimers.

It carries out the reaction (8S)-3',8-cyclo-7,8-dihydroguanosine 5'-triphosphate = cyclic pyranopterin phosphate + diphosphate. The protein operates within cofactor biosynthesis; molybdopterin biosynthesis. In terms of biological role, catalyzes the conversion of (8S)-3',8-cyclo-7,8-dihydroguanosine 5'-triphosphate to cyclic pyranopterin monophosphate (cPMP). This is Cyclic pyranopterin monophosphate synthase from Pasteurella multocida (strain Pm70).